The sequence spans 118 residues: Large ribosomal subunit protein bL17 (118 aa).

The protein belongs to the bacterial ribosomal protein bL17 family. As to quaternary structure, part of the 50S ribosomal subunit. Contacts protein L32.

In Aster yellows witches'-broom phytoplasma (strain AYWB), this protein is Large ribosomal subunit protein bL17.